A 102-amino-acid chain; its full sequence is Large ribosomal subunit protein bL28 (102 aa).

Positions 1-20 (MSRRCELTAKGPQVGHKVSH) are disordered.

This sequence belongs to the bacterial ribosomal protein bL28 family.

This chain is Large ribosomal subunit protein bL28, found in Bradyrhizobium sp. (strain ORS 278).